Reading from the N-terminus, the 1015-residue chain is DNA ligase 3 (1015 aa).

The PARP-type zinc-finger motif lies at phenylalanine 94–serine 186. Cysteine 106, cysteine 109, histidine 140, and cysteine 143 together coordinate Zn(2+). A phosphoserine mark is found at serine 211, serine 217, serine 228, and serine 244. Residues glycine 229–lysine 255 are disordered. The span at lysine 234–alanine 253 shows a compositional bias: polar residues. Interaction with DNA stretches follow at residues proline 279–asparagine 282, valine 323–aspartate 328, threonine 393–aspartate 396, and lysine 426–lysine 432. Glutamate 511 provides a ligand contact to ATP. Residue lysine 513 is the N6-AMP-lysine intermediate of the active site. Arginine 518 and arginine 533 together coordinate ATP. Mg(2+) is bound by residues glutamate 565 and glutamate 660. Lysine 665, arginine 676, and lysine 680 together coordinate ATP. Residues aspartate 849 to lysine 926 form a disordered region. Over residues threonine 854 to lysine 884 the composition is skewed to low complexity. At serine 919 the chain carries Phosphoserine. In terms of domain architecture, BRCT spans valine 939–cysteine 1015.

The protein belongs to the ATP-dependent DNA ligase family. Isoform 3 interacts (via BRCT domain) with the nuclear DNA-repair protein XRCC1. Interacts with POLG. Interacts with POLB. The cofactor is Mg(2+). In terms of tissue distribution, the alpha isoform is expressed in all tissues, while the beta isoform is expressed only in the testis.

It localises to the nucleus. The enzyme catalyses ATP + (deoxyribonucleotide)n-3'-hydroxyl + 5'-phospho-(deoxyribonucleotide)m = (deoxyribonucleotide)n+m + AMP + diphosphate.. The alpha isoform interacts with DNA-repair protein XRCC1 and can correct defective DNA strand-break repair and sister chromatid exchange following treatment with ionizing radiation and alkylating agents. The beta isoform does not interact with XRCC1 and may be specifically involved in the completion of homologous recombination events that occur during meiotic prophase. The polypeptide is DNA ligase 3 (Lig3) (Mus musculus (Mouse)).